The primary structure comprises 513 residues: Ectonucleoside triphosphate diphosphohydrolase 1 (513 aa).

Residues 1-16 lie on the Cytoplasmic side of the membrane; it reads MEDRRESELKVFCSKN. Residues 17-37 traverse the membrane as a helical segment; it reads ILSILGFSCIIAVIALLALGL. Residues 38–481 lie on the Extracellular side of the membrane; sequence TQNKALPENV…SPPLPHSTYV (444 aa). Asn73 carries an N-linked (GlcNAc...) asparagine glycan. Catalysis depends on Glu174, which acts as the Proton acceptor. N-linked (GlcNAc...) asparagine glycosylation is found at Asn227 and Asn245. Disulfide bonds link Cys255/Cys300 and Cys281/Cys327. 2 N-linked (GlcNAc...) asparagine glycosylation sites follow: Asn307 and Asn336. Cys340 and Cys345 form a disulfide bridge. Asn373 carries an N-linked (GlcNAc...) asparagine glycan. Cys393 and Cys416 are oxidised to a cystine. Asn460 carries an N-linked (GlcNAc...) asparagine glycan. Residues 482–502 traverse the membrane as a helical segment; sequence FLMVLFSLILLAVIIVGIVVF. Over 503 to 513 the chain is Cytoplasmic; sequence HKPSYFWKDMV.

The protein belongs to the GDA1/CD39 NTPase family. As to quaternary structure, homodimer; disulfide-linked. Ca(2+) serves as cofactor. Requires Mg(2+) as cofactor. In terms of processing, N-glycosylated. Post-translationally, the N-terminus is blocked. Palmitoylated on Cys-13; which is required for caveola targeting.

It localises to the membrane. The protein resides in the caveola. It carries out the reaction a ribonucleoside 5'-triphosphate + 2 H2O = a ribonucleoside 5'-phosphate + 2 phosphate + 2 H(+). The enzyme catalyses a ribonucleoside 5'-triphosphate + H2O = a ribonucleoside 5'-diphosphate + phosphate + H(+). It catalyses the reaction a ribonucleoside 5'-diphosphate + H2O = a ribonucleoside 5'-phosphate + phosphate + H(+). The catalysed reaction is ATP + 2 H2O = AMP + 2 phosphate + 2 H(+). It carries out the reaction ATP + H2O = ADP + phosphate + H(+). The enzyme catalyses ADP + H2O = AMP + phosphate + H(+). It catalyses the reaction CTP + 2 H2O = CMP + 2 phosphate + 2 H(+). The catalysed reaction is CTP + H2O = CDP + phosphate + H(+). It carries out the reaction CDP + H2O = CMP + phosphate + H(+). The enzyme catalyses GTP + 2 H2O = GMP + 2 phosphate + 2 H(+). It catalyses the reaction GTP + H2O = GDP + phosphate + H(+). The catalysed reaction is GDP + H2O = GMP + phosphate + H(+). It carries out the reaction ITP + 2 H2O = IMP + 2 phosphate + 2 H(+). The enzyme catalyses ITP + H2O = IDP + phosphate + H(+). It catalyses the reaction IDP + H2O = IMP + phosphate + H(+). The catalysed reaction is UTP + 2 H2O = UMP + 2 phosphate + 2 H(+). It carries out the reaction UTP + H2O = UDP + phosphate + H(+). The enzyme catalyses UDP + H2O = UMP + phosphate + H(+). Its function is as follows. Catalyzes the hydrolysis of both di- and triphosphate nucleotides (NDPs and NTPs) and hydrolyze NTPs to nucleotide monophosphates (NMPs) in two distinct successive phosphate-releasing steps, with NDPs as intermediates and participates in the regulation of extracellular levels of nucleotides. By hydrolyzing proinflammatory ATP and platelet-activating ADP to AMP, it blocks platelet aggregation and supports blood flow. This chain is Ectonucleoside triphosphate diphosphohydrolase 1, found in Bos taurus (Bovine).